The following is a 93-amino-acid chain: Co-chaperonin GroES (93 aa).

This sequence belongs to the GroES chaperonin family. Heptamer of 7 subunits arranged in a ring. Interacts with the chaperonin GroEL.

It localises to the cytoplasm. In terms of biological role, together with the chaperonin GroEL, plays an essential role in assisting protein folding. The GroEL-GroES system forms a nano-cage that allows encapsulation of the non-native substrate proteins and provides a physical environment optimized to promote and accelerate protein folding. GroES binds to the apical surface of the GroEL ring, thereby capping the opening of the GroEL channel. This chain is Co-chaperonin GroES, found in Streptococcus constellatus.